The chain runs to 499 residues: Serine/threonine-protein phosphatase 5 (499 aa).

Residues 1–24 (MAMAEGERTECAETPRDEPPADGT) are disordered. At Ala2 the chain carries N-acetylalanine. TPR repeat units lie at residues 28-61 (AEEL…NPGN), 62-95 (AIYY…DKKY), and 96-129 (IKGY…KPND). Residues 184–499 (GKVTITFMKD…ANTLLQLGMM (316 aa)) form a catalytic region. Positions 242, 244, and 271 each coordinate Mn(2+). Substrate is bound at residue His244. Substrate-binding positions include Arg275 and 303–304 (NH). Asn303 contributes to the Mn(2+) binding site. His304 serves as the catalytic Proton donor/acceptor. His352 serves as a coordination point for Mn(2+). Residues Arg400 and His427 each coordinate substrate. Residue His427 participates in Mn(2+) binding. The segment at 495–499 (QLGMM) is required for autoinhibition.

Belongs to the PPP phosphatase family. PP-5 (PP-T) subfamily. Probably forms a complex composed of chaperones HSP90 and HSP70, co-chaperones STIP1/HOP, CDC37, PPP5C, PTGES3/p23, TSC1 and client protein TSC2. Probably forms a complex composed of chaperones HSP90 and HSP70, co-chaperones CDC37, PPP5C, TSC1 and client protein TSC2, CDK4, AKT, RAF1 and NR3C1; this complex does not contain co-chaperones STIP1/HOP and PTGES3/p23. Part of a complex with HSP90/HSP90AA1 and steroid receptors. Interacts (via TPR repeats) with HSP90AA1 (via TPR repeat-binding motif) or HSPA1A/HSPA1B; the interaction is direct and activates the phosphatase activity. Dissociates from HSPA1A/HSPA1B and HSP90AA1 in response to arachidonic acid. Interacts with CPNE1 (via VWFA domain). Interacts with CDC16, CDC27. Interacts with KLHDC10 (via the 6 Kelch repeats); inhibits the phosphatase activity on MAP3K5. Interacts with ATM and ATR; both interactions are induced by DNA damage and enhance ATM and ATR kinase activity. Interacts with RAD17; reduced by DNA damage. Interacts with nuclear receptors such as NR3C1/GCR and PPARG (activated by agonist); regulates their transactivation activities. Interacts (via TPR repeats) with S100 proteins S100A1, S100A2, S100A6, S100B and S100P; the interactions are calcium-dependent, strongly activate PPP5C phosphatase activity and compete with HSP90AA1 and MAP3K5 interactions. Interacts with SMAD2 and SMAD3 but not with SMAD1; decreases SMAD3 phosphorylation and protein levels. Interacts (via TPR repeats) with CRY1 and CRY2; the interaction with CRY2 down-regulates the phosphatase activity on CSNK1E. Interacts (via TPR repeats) with the active form of RAC1, GNA12 or GNA13; these interactions activate the phosphatase activity and translocate PPP5C to the cell membrane. Interacts with FLCN. Requires Mg(2+) as cofactor. It depends on Mn(2+) as a cofactor. In terms of processing, activated by at least two different proteolytic cleavages producing a 56 kDa and a 50 kDa form. As to expression, expressed in liver (at protein level) and brain, enriched in suprachiasmatic nuclei.

The protein localises to the nucleus. It is found in the cytoplasm. It localises to the cell membrane. It catalyses the reaction O-phospho-L-seryl-[protein] + H2O = L-seryl-[protein] + phosphate. The enzyme catalyses O-phospho-L-threonyl-[protein] + H2O = L-threonyl-[protein] + phosphate. Its activity is regulated as follows. Autoinhibited. In the autoinhibited state, the TPR domain interacts with the catalytic region and prevents substrate access to the catalytic pocket. Allosterically activated by various polyunsaturated fatty acids, free long-chain fatty-acids and long-chain fatty acyl-CoA esters, arachidonic acid being the most effective activator. HSP90A and probably RAC1, GNA12 and GNA13 can also release the autoinhibition by the TPR repeat. Activation by RAC1, GNA12 and GNA13 is synergistic with the one produced by fatty acids binding. Inhibited by okadaic acid. Serine/threonine-protein phosphatase that dephosphorylates a myriad of proteins involved in different signaling pathways including the kinases CSNK1E, ASK1/MAP3K5, PRKDC and RAF1, the nuclear receptors NR3C1, PPARG, ESR1 and ESR2, SMAD proteins and TAU/MAPT. Implicated in wide ranging cellular processes, including apoptosis, differentiation, DNA damage response, cell survival, regulation of ion channels or circadian rhythms, in response to steroid and thyroid hormones, calcium, fatty acids, TGF-beta as well as oxidative and genotoxic stresses. Participates in the control of DNA damage response mechanisms such as checkpoint activation and DNA damage repair through, for instance, the regulation ATM/ATR-signaling and dephosphorylation of PRKDC and TP53BP1. Inhibits ASK1/MAP3K5-mediated apoptosis induced by oxidative stress. Plays a positive role in adipogenesis, mainly through the dephosphorylation and activation of PPARG transactivation function. Also dephosphorylates and inhibits the anti-adipogenic effect of NR3C1. Regulates the circadian rhythms, through the dephosphorylation and activation of CSNK1E. May modulate TGF-beta signaling pathway by the regulation of SMAD3 phosphorylation and protein expression levels. Dephosphorylates and may play a role in the regulation of TAU/MAPT. Through their dephosphorylation, may play a role in the regulation of ions channels such as KCNH2. Dephosphorylate FNIP1, disrupting interaction with HSP90AA1/Hsp90. The chain is Serine/threonine-protein phosphatase 5 (Ppp5c) from Mus musculus (Mouse).